The chain runs to 284 residues: Bifunctional protein FolD (284 aa).

Residues 166-168 and isoleucine 232 each bind NADP(+); that span reads GAS.

This sequence belongs to the tetrahydrofolate dehydrogenase/cyclohydrolase family. As to quaternary structure, homodimer.

The catalysed reaction is (6R)-5,10-methylene-5,6,7,8-tetrahydrofolate + NADP(+) = (6R)-5,10-methenyltetrahydrofolate + NADPH. It catalyses the reaction (6R)-5,10-methenyltetrahydrofolate + H2O = (6R)-10-formyltetrahydrofolate + H(+). It participates in one-carbon metabolism; tetrahydrofolate interconversion. Functionally, catalyzes the oxidation of 5,10-methylenetetrahydrofolate to 5,10-methenyltetrahydrofolate and then the hydrolysis of 5,10-methenyltetrahydrofolate to 10-formyltetrahydrofolate. The sequence is that of Bifunctional protein FolD from Pseudomonas aeruginosa (strain LESB58).